Consider the following 402-residue polypeptide: Secondary metabolism regulator laeA (402 aa).

Residues 1–70 are disordered; that stretch reads MSLKYYLNDL…MSPTEVCSTD (70 aa). Positions 11–21 are enriched in acidic residues; it reads SDSDSESESEC.

Belongs to the methyltransferase superfamily. LaeA methyltransferase family.

The protein resides in the nucleus. It catalyses the reaction L-methionyl-[protein] + S-adenosyl-L-methionine = S-methyl-L-methionyl-[protein] + S-adenosyl-L-homocysteine. Functionally, methyltransferase that performs automethylation. No other methyl-accepting substrate has been identified yet. Acts as a global regulator for secondary metabolite gene expression. Negatively regulates the production of coprinoferrin, a structurally novel acylated tripeptide hydroxamate siderophore. The chain is Secondary metabolism regulator laeA from Coprinopsis cinerea (strain Okayama-7 / 130 / ATCC MYA-4618 / FGSC 9003) (Inky cap fungus).